A 376-amino-acid chain; its full sequence is Chaperone protein DnaJ (376 aa).

Positions 5-70 constitute a J domain; the sequence is DYYEVLGVKK…QKRAAYDQYG (66 aa). The CR-type zinc finger occupies 131-209; sequence GVTKEIRIPT…CHGHGRVEKS (79 aa). Zn(2+) contacts are provided by cysteine 144, cysteine 147, cysteine 161, cysteine 164, cysteine 183, cysteine 186, cysteine 197, and cysteine 200. CXXCXGXG motif repeat units lie at residues 144–151, 161–168, 183–190, and 197–204; these read CDVCHGSG, CSTCRGAG, CPTCHGSG, and CNKCHGHG.

It belongs to the DnaJ family. As to quaternary structure, homodimer. It depends on Zn(2+) as a cofactor.

Its subcellular location is the cytoplasm. Participates actively in the response to hyperosmotic and heat shock by preventing the aggregation of stress-denatured proteins and by disaggregating proteins, also in an autonomous, DnaK-independent fashion. Unfolded proteins bind initially to DnaJ; upon interaction with the DnaJ-bound protein, DnaK hydrolyzes its bound ATP, resulting in the formation of a stable complex. GrpE releases ADP from DnaK; ATP binding to DnaK triggers the release of the substrate protein, thus completing the reaction cycle. Several rounds of ATP-dependent interactions between DnaJ, DnaK and GrpE are required for fully efficient folding. Also involved, together with DnaK and GrpE, in the DNA replication of plasmids through activation of initiation proteins. This is Chaperone protein DnaJ from Yersinia enterocolitica serotype O:8 / biotype 1B (strain NCTC 13174 / 8081).